Reading from the N-terminus, the 213-residue chain is MFNQSYLNVYFICGTSDVPSHRTIHEVLEAALKAGITLFQFREKGESALKGNDKLVLAKELQHLCHQYDVPFIVNDDVSLAKEINADGIHVGQDDAKVKEIAQYFTDKIIGLSISDLDEYAKSDLTHVDYIGVGPIYPTPSKHDAHIPVGPEMIATFKEMNPQLPIVAIGGINTNNVAPIVEAGANGISVISAISKSENIENTVNRFKDFFNN.

Residues 40–44 (QFREK) and Asn75 each bind 4-amino-2-methyl-5-(diphosphooxymethyl)pyrimidine. Asp76 and Asp95 together coordinate Mg(2+). A 4-amino-2-methyl-5-(diphosphooxymethyl)pyrimidine-binding site is contributed by Ser113. 139-141 (TPS) lines the 2-[(2R,5Z)-2-carboxy-4-methylthiazol-5(2H)-ylidene]ethyl phosphate pocket. Lys142 provides a ligand contact to 4-amino-2-methyl-5-(diphosphooxymethyl)pyrimidine. Residues Gly171 and 191 to 192 (IS) contribute to the 2-[(2R,5Z)-2-carboxy-4-methylthiazol-5(2H)-ylidene]ethyl phosphate site.

The protein belongs to the thiamine-phosphate synthase family. Requires Mg(2+) as cofactor.

The enzyme catalyses 2-[(2R,5Z)-2-carboxy-4-methylthiazol-5(2H)-ylidene]ethyl phosphate + 4-amino-2-methyl-5-(diphosphooxymethyl)pyrimidine + 2 H(+) = thiamine phosphate + CO2 + diphosphate. It carries out the reaction 2-(2-carboxy-4-methylthiazol-5-yl)ethyl phosphate + 4-amino-2-methyl-5-(diphosphooxymethyl)pyrimidine + 2 H(+) = thiamine phosphate + CO2 + diphosphate. It catalyses the reaction 4-methyl-5-(2-phosphooxyethyl)-thiazole + 4-amino-2-methyl-5-(diphosphooxymethyl)pyrimidine + H(+) = thiamine phosphate + diphosphate. The protein operates within cofactor biosynthesis; thiamine diphosphate biosynthesis; thiamine phosphate from 4-amino-2-methyl-5-diphosphomethylpyrimidine and 4-methyl-5-(2-phosphoethyl)-thiazole: step 1/1. Its function is as follows. Condenses 4-methyl-5-(beta-hydroxyethyl)thiazole monophosphate (THZ-P) and 2-methyl-4-amino-5-hydroxymethyl pyrimidine pyrophosphate (HMP-PP) to form thiamine monophosphate (TMP). This is Thiamine-phosphate synthase from Staphylococcus aureus (strain MSSA476).